A 428-amino-acid chain; its full sequence is 3-phosphoshikimate 1-carboxyvinyltransferase (428 aa).

Residues Lys-20, Ser-21, and Arg-25 each contribute to the 3-phosphoshikimate site. Lys-20 serves as a coordination point for phosphoenolpyruvate. 2 residues coordinate phosphoenolpyruvate: Gly-92 and Arg-120. 3-phosphoshikimate-binding residues include Ser-166, Gln-168, Asp-314, and Lys-341. Gln-168 lines the phosphoenolpyruvate pocket. Catalysis depends on Asp-314, which acts as the Proton acceptor. Phosphoenolpyruvate-binding residues include Arg-345 and Arg-387.

The protein belongs to the EPSP synthase family. As to quaternary structure, monomer.

The protein resides in the cytoplasm. The enzyme catalyses 3-phosphoshikimate + phosphoenolpyruvate = 5-O-(1-carboxyvinyl)-3-phosphoshikimate + phosphate. It participates in metabolic intermediate biosynthesis; chorismate biosynthesis; chorismate from D-erythrose 4-phosphate and phosphoenolpyruvate: step 6/7. Catalyzes the transfer of the enolpyruvyl moiety of phosphoenolpyruvate (PEP) to the 5-hydroxyl of shikimate-3-phosphate (S3P) to produce enolpyruvyl shikimate-3-phosphate and inorganic phosphate. This chain is 3-phosphoshikimate 1-carboxyvinyltransferase, found in Listeria monocytogenes serovar 1/2a (strain ATCC BAA-679 / EGD-e).